The following is a 98-amino-acid chain: Keratinocyte differentiation-associated protein (98 aa).

Positions M1–G22 are cleaved as a signal peptide.

Ubiquitously expressed in stratified epithelium.

The protein resides in the secreted. Functionally, may act as a soluble regulator of keratinocyte differentiation. May play an important role in embryonic skin morphogenesis. This Rattus norvegicus (Rat) protein is Keratinocyte differentiation-associated protein.